A 122-amino-acid polypeptide reads, in one-letter code: LYR motif-containing protein 1 (122 aa).

Belongs to the complex I LYR family. High levels in adipose tissue.

The protein localises to the nucleus. In terms of biological role, may promote cell proliferation and inhibition of apoptosis of preadipocytes. The sequence is that of LYR motif-containing protein 1 (LYRM1) from Homo sapiens (Human).